We begin with the raw amino-acid sequence, 326 residues long: MHTGGEPLRIVTDGFPKPDGKTILQKRRFVKEKLDNFRKLLMHEPRGHYDMYGALLVEPDIEDADIAVLFMDNRSYSTMCGHAVIALGRYATDYGYVRPTEPETKVNIECPCGLVKALVEYKNGKSGSVRFQSVPAFVFATDVELNVQGHGKVKVDISYGGAFYAFISADKLGLDLWKTPINQIKDAATMVTNAVKNEVQLEHPDDNDLAFIYGTIVTDGKDEYSDEPTANICVFADAQVDRSPTGSGVTARTALQYHKRHISLNKSRVFVNARIGSKFSAKPVRQTKCGSYDAVIIEVSGHAFYTGKSAFTFEEDDPLKGGFLLK.

C80 serves as the catalytic Proton acceptor. Residues G81–H82, D241, and G246–S247 each bind substrate.

It belongs to the proline racemase family. As to quaternary structure, homodimer.

It catalyses the reaction trans-3-hydroxy-L-proline = 1-pyrroline-2-carboxylate + H2O. Catalyzes the dehydration of trans-3-hydroxy-L-proline to delta-1-pyrroline-2-carboxylate (Pyr2C). This is Trans-L-3-hydroxyproline dehydratase (l3hypdh) from Saccoglossus kowalevskii (Acorn worm).